Here is a 120-residue protein sequence, read N- to C-terminus: U13-lycotoxin-Ls1a (120 aa).

The N-terminal stretch at 1–16 (MKILFVLISILYAVYC) is a signal peptide. Positions 17 to 54 (FSSEEDVDSAYLANELEPVEDINSEQYAALEPKEEQGR) are excised as a propeptide. Cystine bridges form between C56/C70, C63/C76, C69/C87, and C78/C85. Residues 56-95 (CADMGQDCKDDCDCCLNIATCNCWFGRYFCSCTFGDYQTC) form the Agouti domain.

This sequence belongs to the neurotoxin 05 (agouti) family. Contains 6 disulfide bonds. In terms of tissue distribution, expressed by the venom gland.

The protein resides in the secreted. This is U13-lycotoxin-Ls1a from Lycosa singoriensis (Wolf spider).